Reading from the N-terminus, the 23-residue chain is Phospholipase A1 verutoxin-1 (23 aa).

It belongs to the AB hydrolase superfamily. Lipase family. Post-translationally, contains six disulfide bonds. In terms of tissue distribution, expressed by the venom gland.

The protein localises to the secreted. The catalysed reaction is a 1,2-diacyl-sn-glycero-3-phosphocholine + H2O = a 2-acyl-sn-glycero-3-phosphocholine + a fatty acid + H(+). It catalyses the reaction 1-(9Z-octadecenoyl)-2-hexadecanoyl-sn-glycero-3-phosphocholine + H2O = 2-hexadecanoyl-sn-glycero-3-phosphocholine + (9Z)-octadecenoate + H(+). The enzyme catalyses a 1-acyl-sn-glycero-3-phosphocholine + H2O = sn-glycerol 3-phosphocholine + a fatty acid + H(+). Its pathway is phospholipid metabolism. Its activity is regulated as follows. Activity is maximal in the presence of calcium. However, unlike phospholipases A2 whose catalytic activity is strictly calcium-dependent, this enzyme shows considerable catalytic activity on phosphatidylcholine emulsified in calcium free solution; the catalytic activity of VT-1 assayed in the absence of calcium ions is 18-20% of that assayed in solution containing calcium ions. Functionally, catalyzes the hydrolysis of glycerophospholipids such as phosphatidylcholine (1,2-diacyl-sn-glycero-3-phosphocholine) and has a moderate activity to hydrolyze lysoglycerophospholipids such as lysophosphatidylcholine (1-acyl-sn-glycero-3-phosphocholine), but is unable to hydrolyze sphingomyelin. Liberates the fatty acid from the sn-1 position of 1,2-diacyl-sn-glycero-3-phosphocholine mainly, indicating phospholipase activity of the A1 type. In addition to acting as an allergen, it possesses a moderate hemolytic activity on red blood cells of mice (3% of hemolysis at 3.0 ug/ml). This chain is Phospholipase A1 verutoxin-1, found in Vespa velutina (Asian yellow-legged hornet).